A 33-amino-acid polypeptide reads, in one-letter code: Mytimycin (33 aa).

It is found in the secreted. Its function is as follows. Has antifungal activity against N.crassa and F.culmorum. The chain is Mytimycin from Mytilus edulis (Blue mussel).